The chain runs to 223 residues: Protein DEHYDRATION-INDUCED 19 homolog 3 (223 aa).

Phosphothreonine is present on Thr-114. Phosphoserine is present on Ser-116.

The protein belongs to the Di19 family. Post-translationally, phosphorylated in vitro by CPK3 or CPK11. Expressed in seedlings, roots, leaves, stems, flowers and siliques.

It localises to the nucleus. The protein is Protein DEHYDRATION-INDUCED 19 homolog 3 (DI19-3) of Arabidopsis thaliana (Mouse-ear cress).